A 56-amino-acid polypeptide reads, in one-letter code: Attractin (56 aa).

3 cysteine pairs are disulfide-bonded: Cys4/Cys41, Cys13/Cys33, and Cys20/Cys26.

Produced by the albumen gland of the egg cordons.

It is found in the secreted. In terms of biological role, water-borne pheromone that attract the marine mollusk Aplysia into breeding aggregations and coordinate male and female reproductive behavior within the aggregation. The sequence is that of Attractin (ATT) from Aplysia vaccaria (California black sea hare).